A 484-amino-acid polypeptide reads, in one-letter code: tRNA-2-methylthio-N(6)-dimethylallyladenosine synthase (484 aa).

Residues 36–153 (GKLYIKTHGC…LPELIRARRE (118 aa)) form the MTTase N-terminal domain. Residues cysteine 45, cysteine 82, cysteine 116, cysteine 190, cysteine 194, and cysteine 197 each coordinate [4Fe-4S] cluster. One can recognise a Radical SAM core domain in the interval 176-415 (RAEGPSAFVS…HISAHAASIS (240 aa)). Residues 416-479 (QSMVGSVQRV…SNSLRGRIQL (64 aa)) enclose the TRAM domain. The interval 428–450 (EGPSRRDPNELTGKSENMRPVNF) is disordered.

It belongs to the methylthiotransferase family. MiaB subfamily. As to quaternary structure, monomer. [4Fe-4S] cluster is required as a cofactor.

It is found in the cytoplasm. It catalyses the reaction N(6)-dimethylallyladenosine(37) in tRNA + (sulfur carrier)-SH + AH2 + 2 S-adenosyl-L-methionine = 2-methylsulfanyl-N(6)-dimethylallyladenosine(37) in tRNA + (sulfur carrier)-H + 5'-deoxyadenosine + L-methionine + A + S-adenosyl-L-homocysteine + 2 H(+). In terms of biological role, catalyzes the methylthiolation of N6-(dimethylallyl)adenosine (i(6)A), leading to the formation of 2-methylthio-N6-(dimethylallyl)adenosine (ms(2)i(6)A) at position 37 in tRNAs that read codons beginning with uridine. This chain is tRNA-2-methylthio-N(6)-dimethylallyladenosine synthase, found in Xanthomonas oryzae pv. oryzae (strain PXO99A).